The sequence spans 463 residues: Bifunctional protein HldE (463 aa).

Residues 1 to 311 (MKQILVVGDL…EEIALILNQT (311 aa)) are ribokinase. 191–194 (NRIE) serves as a coordination point for ATP. The active site involves aspartate 260. The segment at 334–463 (FTNGCFDILH…IERIKRTCND (130 aa)) is cytidylyltransferase.

The protein in the N-terminal section; belongs to the carbohydrate kinase PfkB family. This sequence in the C-terminal section; belongs to the cytidylyltransferase family. As to quaternary structure, homodimer.

It carries out the reaction D-glycero-beta-D-manno-heptose 7-phosphate + ATP = D-glycero-beta-D-manno-heptose 1,7-bisphosphate + ADP + H(+). The catalysed reaction is D-glycero-beta-D-manno-heptose 1-phosphate + ATP + H(+) = ADP-D-glycero-beta-D-manno-heptose + diphosphate. It functions in the pathway nucleotide-sugar biosynthesis; ADP-L-glycero-beta-D-manno-heptose biosynthesis; ADP-L-glycero-beta-D-manno-heptose from D-glycero-beta-D-manno-heptose 7-phosphate: step 1/4. The protein operates within nucleotide-sugar biosynthesis; ADP-L-glycero-beta-D-manno-heptose biosynthesis; ADP-L-glycero-beta-D-manno-heptose from D-glycero-beta-D-manno-heptose 7-phosphate: step 3/4. Its function is as follows. Catalyzes the phosphorylation of D-glycero-D-manno-heptose 7-phosphate at the C-1 position to selectively form D-glycero-beta-D-manno-heptose-1,7-bisphosphate. Catalyzes the ADP transfer from ATP to D-glycero-beta-D-manno-heptose 1-phosphate, yielding ADP-D-glycero-beta-D-manno-heptose. The protein is Bifunctional protein HldE of Helicobacter pylori (strain Shi470).